Consider the following 392-residue polypeptide: ATP phosphoribosyltransferase regulatory subunit (392 aa).

It belongs to the class-II aminoacyl-tRNA synthetase family. HisZ subfamily. As to quaternary structure, heteromultimer composed of HisG and HisZ subunits.

It localises to the cytoplasm. It participates in amino-acid biosynthesis; L-histidine biosynthesis; L-histidine from 5-phospho-alpha-D-ribose 1-diphosphate: step 1/9. Required for the first step of histidine biosynthesis. May allow the feedback regulation of ATP phosphoribosyltransferase activity by histidine. In Synechococcus sp. (strain CC9902), this protein is ATP phosphoribosyltransferase regulatory subunit.